The sequence spans 511 residues: GMP synthase [glutamine-hydrolyzing] (511 aa).

The Glutamine amidotransferase type-1 domain maps to 5–195; that stretch reads PIVVLDFGSQ…AKHICGCEST (191 aa). The Nucleophile role is filled by Cys-82. Residues His-169 and Glu-171 contribute to the active site. The 191-residue stretch at 196 to 386 folds into the GMPS ATP-PPase domain; the sequence is WNMGSFAKEQ…LGLPKSMISR (191 aa). 223–229 contacts ATP; that stretch reads SGGVDSS.

Homodimer.

The catalysed reaction is XMP + L-glutamine + ATP + H2O = GMP + L-glutamate + AMP + diphosphate + 2 H(+). It functions in the pathway purine metabolism; GMP biosynthesis; GMP from XMP (L-Gln route): step 1/1. Functionally, catalyzes the synthesis of GMP from XMP. The sequence is that of GMP synthase [glutamine-hydrolyzing] from Aliarcobacter butzleri (strain RM4018) (Arcobacter butzleri).